We begin with the raw amino-acid sequence, 236 residues long: Potassium/proton antiporter CemA (236 aa).

4 consecutive transmembrane segments (helical) span residues 18 to 38, 114 to 134, 161 to 181, and 196 to 216; these read YIIS…FLVL, IAHV…LINA, LILF…KILI, and FIFL…KYWI.

Belongs to the CemA family.

It is found in the plastid. The protein localises to the chloroplast inner membrane. It carries out the reaction K(+)(in) + H(+)(out) = K(+)(out) + H(+)(in). Functionally, contributes to K(+)/H(+) antiport activity by supporting proton efflux to control proton extrusion and homeostasis in chloroplasts in a light-dependent manner to modulate photosynthesis. Prevents excessive induction of non-photochemical quenching (NPQ) under continuous-light conditions. Indirectly promotes efficient inorganic carbon uptake into chloroplasts. This Mesostigma viride (Green alga) protein is Potassium/proton antiporter CemA.